We begin with the raw amino-acid sequence, 393 residues long: Glucose-1-phosphate adenylyltransferase (393 aa).

Alpha-D-glucose 1-phosphate contacts are provided by residues Tyr-105, Gly-170, 185-186 (EK), and Ser-196.

The protein belongs to the bacterial/plant glucose-1-phosphate adenylyltransferase family. Homotetramer.

The enzyme catalyses alpha-D-glucose 1-phosphate + ATP + H(+) = ADP-alpha-D-glucose + diphosphate. The protein operates within glycan biosynthesis; glycogen biosynthesis. Its function is as follows. Involved in the biosynthesis of ADP-glucose, a building block required for the elongation reactions to produce glycogen. Catalyzes the reaction between ATP and alpha-D-glucose 1-phosphate (G1P) to produce pyrophosphate and ADP-Glc. The chain is Glucose-1-phosphate adenylyltransferase from Clostridium perfringens (strain 13 / Type A).